The sequence spans 382 residues: Methenyltetrahydrofolate synthase domain-containing protein (382 aa).

One can recognise an RRM domain in the interval 306-382 (TTVYLSDIPP…QAKCVSSQKM (77 aa)).

This is Methenyltetrahydrofolate synthase domain-containing protein (mthfsd) from Danio rerio (Zebrafish).